The chain runs to 471 residues: UTP--glucose-1-phosphate uridylyltransferase (471 aa).

Residues L87–G90, K101, Q164, and G193 contribute to the UTP site. G89 to G90 is a substrate binding site. Substrate is bound by residues H194 and N222–D224. D224 and K362 together coordinate UTP.

The protein belongs to the UDPGP type 1 family.

The protein localises to the cytoplasm. The catalysed reaction is alpha-D-glucose 1-phosphate + UTP + H(+) = UDP-alpha-D-glucose + diphosphate. Plays a central role as a glucosyl donor in cellular metabolic pathways. The polypeptide is UTP--glucose-1-phosphate uridylyltransferase (Pyrus pyrifolia (Chinese pear)).